The following is a 332-amino-acid chain: Lipoyl synthase (332 aa).

[4Fe-4S] cluster-binding residues include cysteine 79, cysteine 84, cysteine 90, cysteine 105, cysteine 109, cysteine 112, and serine 319. The 218-residue stretch at 91–308 folds into the Radical SAM core domain; the sequence is FSHGTATFMI…ADYGYEIGFK (218 aa).

Belongs to the radical SAM superfamily. Lipoyl synthase family. [4Fe-4S] cluster is required as a cofactor.

Its subcellular location is the cytoplasm. It catalyses the reaction [[Fe-S] cluster scaffold protein carrying a second [4Fe-4S](2+) cluster] + N(6)-octanoyl-L-lysyl-[protein] + 2 oxidized [2Fe-2S]-[ferredoxin] + 2 S-adenosyl-L-methionine + 4 H(+) = [[Fe-S] cluster scaffold protein] + N(6)-[(R)-dihydrolipoyl]-L-lysyl-[protein] + 4 Fe(3+) + 2 hydrogen sulfide + 2 5'-deoxyadenosine + 2 L-methionine + 2 reduced [2Fe-2S]-[ferredoxin]. It functions in the pathway protein modification; protein lipoylation via endogenous pathway; protein N(6)-(lipoyl)lysine from octanoyl-[acyl-carrier-protein]: step 2/2. Catalyzes the radical-mediated insertion of two sulfur atoms into the C-6 and C-8 positions of the octanoyl moiety bound to the lipoyl domains of lipoate-dependent enzymes, thereby converting the octanoylated domains into lipoylated derivatives. This Hahella chejuensis (strain KCTC 2396) protein is Lipoyl synthase.